A 175-amino-acid polypeptide reads, in one-letter code: Protein OPG036 (175 aa).

This sequence belongs to the poxviridae OPG036 family.

The protein localises to the host nucleus. Functionally, plays a role in the inhibition of host innate immune response. Within the host nucleus, inhibits activation of interferon-beta promoter by inhibiting IRF3 activation. In Bos taurus (Bovine), this protein is Protein OPG036 (OPG036).